Consider the following 124-residue polypeptide: MLKSKIHRATITDACIDYEGSITIDKNLMQAANLLPYEQVHVVNVNNGTRLETYVIEGSAGSGQICLNGAAARMGMKGDKIIILGYSLITEEDTLIHQPNLVYVDALNRITKVKNGVANQGLEV.

The active-site Schiff-base intermediate with substrate; via pyruvic acid is serine 21. At serine 21 the chain carries Pyruvic acid (Ser). Threonine 53 contributes to the substrate binding site. The active-site Proton donor is tyrosine 54. Residue 69–71 (GAA) coordinates substrate.

This sequence belongs to the PanD family. Heterooctamer of four alpha and four beta subunits. It depends on pyruvate as a cofactor. Is synthesized initially as an inactive proenzyme, which is activated by self-cleavage at a specific serine bond to produce a beta-subunit with a hydroxyl group at its C-terminus and an alpha-subunit with a pyruvoyl group at its N-terminus.

Its subcellular location is the cytoplasm. It catalyses the reaction L-aspartate + H(+) = beta-alanine + CO2. It functions in the pathway cofactor biosynthesis; (R)-pantothenate biosynthesis; beta-alanine from L-aspartate: step 1/1. In terms of biological role, catalyzes the pyruvoyl-dependent decarboxylation of aspartate to produce beta-alanine. The protein is Aspartate 1-decarboxylase of Dehalococcoides mccartyi (strain CBDB1).